The following is a 344-amino-acid chain: Lipase chaperone (344 aa).

Residues 14–34 (AVVYGAVGLAAIAGVAMWSGA) form a helical membrane-spanning segment. Residues 37–78 (HGGTGASGEPPDASAARGPAAAPPQAAVPASTSLPPSLAGSS) form a disordered region. Low complexity predominate over residues 43–78 (SGEPPDASAARGPAAAPPQAAVPASTSLPPSLAGSS).

The protein belongs to the lipase chaperone family.

It localises to the cell inner membrane. Functionally, may be involved in the folding of the extracellular lipase during its passage through the periplasm. In Burkholderia cepacia (Pseudomonas cepacia), this protein is Lipase chaperone (lifO).